The chain runs to 421 residues: Adenylosuccinate synthetase (421 aa).

GTP-binding positions include 11 to 17 (GDEGKGK) and 39 to 41 (GHT). Residue Asp-12 is the Proton acceptor of the active site. Residues Asp-12 and Gly-39 each coordinate Mg(2+). IMP contacts are provided by residues 12–15 (DEGK), 37–40 (NAGH), Thr-129, Arg-143, Asn-219, Thr-234, and Arg-298. Catalysis depends on His-40, which acts as the Proton donor. 294-300 (VTTGRRR) contributes to the substrate binding site. GTP is bound by residues Arg-300, 326-328 (KLD), and 409-411 (GTG).

Belongs to the adenylosuccinate synthetase family. As to quaternary structure, homodimer. It depends on Mg(2+) as a cofactor.

It is found in the cytoplasm. The enzyme catalyses IMP + L-aspartate + GTP = N(6)-(1,2-dicarboxyethyl)-AMP + GDP + phosphate + 2 H(+). The protein operates within purine metabolism; AMP biosynthesis via de novo pathway; AMP from IMP: step 1/2. Plays an important role in the de novo pathway and in the salvage pathway of purine nucleotide biosynthesis. Catalyzes the first committed step in the biosynthesis of AMP from IMP. This Paracoccidioides lutzii (strain ATCC MYA-826 / Pb01) (Paracoccidioides brasiliensis) protein is Adenylosuccinate synthetase.